Reading from the N-terminus, the 116-residue chain is MAGRSGDRDEELLKAVRYIKILYQSNPYPKLEGTRKARRNRRRRWRARQRQIHQISERILSTCLGRLQEPVRLQLPLLEKLHINCSEDCGQGTEKGVGSPQISVESRAVLGSGTKE.

Residue Ser-5 is modified to Phosphoserine; by host CK2. A homomultimerization region spans residues Tyr-18 to Asn-26. A Nuclear localization signal and RNA-binding (RRE) motif is present at residues Thr-34 to Arg-50. A Nuclear export signal and binding to XPO1 motif is present at residues Leu-73–Asn-84. Positions Gly-90–Glu-116 are disordered. A Phosphoserine; by host modification is found at Ser-99.

Belongs to the HIV-1 REV protein family. In terms of assembly, homomultimer; when bound to the RRE. Multimeric assembly is essential for activity and may involve XPO1. Binds to human KPNB1, XPO1, TNPO1, RANBP5 and IPO7. Interacts with the viral Integrase. Interacts with human KHDRBS1. Interacts with human NAP1; this interaction decreases Rev multimerization and stimulates its activity. Interacts with human DEAD-box helicases DDX3 and DDX24; these interactions may serve for viral RNA export to the cytoplasm and packaging, respectively. Interacts with human PSIP1; this interaction may inhibit HIV-1 DNA integration by promoting dissociation of the Integrase-LEDGF/p75 complex. In terms of processing, asymmetrically arginine dimethylated at one site by host PRMT6. Methylation impairs the RNA-binding activity and export of viral RNA from the nucleus to the cytoplasm. Post-translationally, phosphorylated by protein kinase CK2. Presence of, and maybe binding to the N-terminus of the regulatory beta subunit of CK2 is necessary for CK2-mediated Rev's phosphorylation.

The protein localises to the host nucleus. The protein resides in the host nucleolus. It localises to the host cytoplasm. Functionally, escorts unspliced or incompletely spliced viral pre-mRNAs (late transcripts) out of the nucleus of infected cells. These pre-mRNAs carry a recognition sequence called Rev responsive element (RRE) located in the env gene, that is not present in fully spliced viral mRNAs (early transcripts). This function is essential since most viral proteins are translated from unspliced or partially spliced pre-mRNAs which cannot exit the nucleus by the pathway used by fully processed cellular mRNAs. Rev itself is translated from a fully spliced mRNA that readily exits the nucleus. Rev's nuclear localization signal (NLS) binds directly to KPNB1/Importin beta-1 without previous binding to KPNA1/Importin alpha-1. KPNB1 binds to the GDP bound form of RAN (Ran-GDP) and targets Rev to the nucleus. In the nucleus, the conversion from Ran-GDP to Ran-GTP dissociates Rev from KPNB1 and allows Rev's binding to the RRE in viral pre-mRNAs. Rev multimerization on the RRE via cooperative assembly exposes its nuclear export signal (NES) to the surface. Rev can then form a complex with XPO1/CRM1 and Ran-GTP, leading to nuclear export of the complex. Conversion from Ran-GTP to Ran-GDP mediates dissociation of the Rev/RRE/XPO1/RAN complex, so that Rev can return to the nucleus for a subsequent round of export. Beside KPNB1, also seems to interact with TNPO1/Transportin-1, RANBP5/IPO5 and IPO7/RANBP7 for nuclear import. The nucleoporin-like HRB/RIP is an essential cofactor that probably indirectly interacts with Rev to release HIV RNAs from the perinuclear region to the cytoplasm. This Human immunodeficiency virus type 1 group M subtype F2 (isolate MP257) (HIV-1) protein is Protein Rev.